We begin with the raw amino-acid sequence, 786 residues long: MVHFCGLLTLHREPVPLKSISVSVNIYEFVAGVSATLNYENEEKVPLEAFFVFPMDEDSAVYSFEALVDGKKIVAELQDKMKARTNYEKAISQGHQAFLLEGDSSSRDVFSCNVGNLQPGSKAAVTLKYVQELPLEADGALRFVLPAVLNPRYQFSGSSKDSCLNVKTPIVPVEDLPYTLSMVATIDSQHGIEKVQSNCPLSPTEYLGEDKTSAQVSLAAGHKFDRDVELLIYYNEVHTPSVVLEMGMPNMKPGHLMGDPSAMVSFYPNIPEDQPSNTCGEFIFLMDRSGSMQSPMSSQDTSQLRIQAAKETLILLLKSLPIGCYFNIYGFGSSYEACFPESVKYTQQTMEEALGRVKLMQADLGGTEILAPLQNIYRGPSIPGHPLQLFVFTDGEVTDTFSVIKEVRINRQKHRCFSFGIGEGTSTSLIKGIARASGGTSEFITGKDRMQSKALRTLKRSLQPVVEDVSLSWHLPPGLSAKMLSPEQTVIFRGQRLISYAQLTGRMPAAETTGEVCLKYTLQGKTFEDKVTFPLQPKPDVNLTIHRLAAKSLLQTKDMGLRETPASDKKDALNLSLESGVISSFTAFIAINKELNKPVQGPLAHRDVPRPILLGASAPLKIKCQSGFRKALHSDRPPSASQPRGELMCYKAKTFQMDDYSLCGLISHKDQHSPGFGENHLVQLIYHQNANGSWDLNEDLAKILGMSLEEIMAAQPAELVDSSGWATILAVIWLHSNGKDLKCEWELLERKAVAWMRAHAGSTMPSVVKAAITFLKSSVDPAIFAF.

One can recognise a VIT domain in the interval 1–131 (MVHFCGLLTL…KAAVTLKYVQ (131 aa)). The VWFA domain occupies 281 to 462 (EFIFLMDRSG…KALRTLKRSL (182 aa)).

As to expression, expressed at low level in many tissues. Not expressed in 80% of tumor cell lines tested.

In terms of biological role, may play a role in tumorigenesis as a tumor suppressor. Altered expression of this protein and disruption of the molecular pathway it is involved in, may contribute directly to or modify tumorigenesis. This Homo sapiens (Human) protein is von Willebrand factor A domain-containing protein 5A (VWA5A).